The primary structure comprises 75 residues: Toxin-like peptide AaF1CA7 (75 aa).

Residues 1-22 (MMKLMLFSIIVILFSLIGSIHG) form the signal peptide. In terms of domain architecture, LCN-type CS-alpha/beta spans 25–75 (VPGNYPLDSSDDTYLCAPLGENPSCIQICRKHGVKYGYCYAFQCWCEYFGR). Cystine bridges form between C40–C63, C49–C68, and C53–C70.

It belongs to the long (3 C-C) scorpion toxin superfamily. As to expression, expressed by the venom gland.

The protein resides in the secreted. Its function is as follows. Probable neurotoxin that inhibits ion channels. This Androctonus australis (Sahara scorpion) protein is Toxin-like peptide AaF1CA7.